Here is an 807-residue protein sequence, read N- to C-terminus: MPKQDSLWLKSLRWIQKHLVHTIVVPQDPFADLNLDTSRPLAYVMKTESLSDIAALSEVTEKLGLPSPYEPLVVNGVVAPRVVCLQGRKPLFGERAGNEPFLECFMRLLAVHKERPELDIQLVPVSLYWGRTPGKEDDTMKAAVLERENPTWLRKCFMILFLGRHNFVQFSNAVSLRYMADEHGTDMGIAHKLARVARVHFRRQRKVMTGPLLPNRQALFDSLLKSESLRKAIQEEAVSKKISETQSRETAIEYLDEIAANYSDSLVRIAERFLTWLWNKLYSGINIKGAEHIRQLHHDGHEIVYVPCHRSHMDYLLLSYILYYQGMVPPHIAAGINLNFWPAGPLFRRGGAFFIRRSFNGNKLYTAVFREYLDQLFAKGYSVEYFSEGGRSRTGRLLAPKTGMIAMTMNSVLRGIERPVTLVPVYLGYDHVMEVATYHKELSGKKKQKESVWQVFGAIRKLGNFGQGYVNFGEPITLQTFLNEMAPNWRAELADDPEQKPTWLTPAVNVLANRVMTRINDAAAASSVTLTSLALLASEQNALERCLLERQLDLYLTLLKRVPYTSFTSVAEGDGKHLVQQGIDLNKFSVSSDPLGEIVSIDANQAISMTYYRNNIIHLFIIPSLIASCLTHNEQSQRQQIVAIVNDFYPLLKAELFMGIKDIPSYVNQVLDLFIEQGLITESDNLSVVTEHSSQLVLLSGSVSETLQRYAIIFNLLAHRPKMERSELESESHLLAQRLGALHGITAPEFYDKKLYGTLSVKLKELGYLSDKDDKSDVKRIRDQANSLLRASVRQTIVASVTAEHIS.

The short motif at 308–313 (CHRSHM) is the HXXXXD motif element.

This sequence belongs to the GPAT/DAPAT family.

It localises to the cell inner membrane. It catalyses the reaction sn-glycerol 3-phosphate + an acyl-CoA = a 1-acyl-sn-glycero-3-phosphate + CoA. The protein operates within phospholipid metabolism; CDP-diacylglycerol biosynthesis; CDP-diacylglycerol from sn-glycerol 3-phosphate: step 1/3. This chain is Glycerol-3-phosphate acyltransferase, found in Shewanella sp. (strain W3-18-1).